The primary structure comprises 97 residues: YcgL domain-containing protein Pfl01_1389 (97 aa).

A YcgL domain is found at 3-87; that stretch reads RICSIYQSSK…AEEEYIEHLP (85 aa).

In Pseudomonas fluorescens (strain Pf0-1), this protein is YcgL domain-containing protein Pfl01_1389.